The primary structure comprises 121 residues: Alpha-endosulfine (121 aa).

A disordered region spans residues 1–53 (MSQKQEEENPAEETGEEKQDTQEKEGILPEKAEEAKLKAKYPSLGQKPGGSDF). Residue serine 2 is modified to N-acetylserine. Serine 2 is subject to Phosphoserine. Over residues 16–37 (EEKQDTQEKEGILPEKAEEAKL) the composition is skewed to basic and acidic residues. Threonine 21 is subject to Phosphothreonine. Serine 43 carries the post-translational modification Phosphoserine. Phosphoserine; by GWL is present on serine 67. Positions 79–121 (NKQLPSAGPDKNLVTGDHIPTPQDLPQRKSSLVTSKLAGGQVE) are disordered. Serine 109 carries the post-translational modification Phosphoserine; by PKA.

It belongs to the endosulfine family. In terms of assembly, interacts (when phosphorylated at Ser-67) with PPP2R2D. Interacts with ABCC8. Interacts with SNCA; interaction is disrupted when phosphorylated at Ser-109. In terms of processing, phosphorylation at Ser-67 by GWL during mitosis is essential for interaction with PPP2R2D (PR55-delta) and subsequent inactivation of PP2A. Phosphorylated by PKA.

It is found in the cytoplasm. In terms of biological role, protein phosphatase inhibitor that specifically inhibits protein phosphatase 2A (PP2A) during mitosis. When phosphorylated at Ser-67 during mitosis, specifically interacts with PPP2R2D (PR55-delta) and inhibits its activity, leading to inactivation of PP2A, an essential condition to keep cyclin-B1-CDK1 activity high during M phase. Also acts as a stimulator of insulin secretion by interacting with sulfonylurea receptor (ABCC8), thereby preventing sulfonylurea from binding to its receptor and reducing K(ATP) channel currents. The polypeptide is Alpha-endosulfine (ENSA) (Bos taurus (Bovine)).